The chain runs to 536 residues: Sensory rhodopsin I transducer (536 aa).

Residues 2-14 (TIAWARRRYGVKL) are Cytoplasmic-facing. Residues 15 to 29 (GLGYIATAGLLVGVG) traverse the membrane as a helical segment. Residues 30–39 (VTTNDVPSTI) are Extracellular-facing. A helical transmembrane segment spans residues 40-55 (VAGIAGLLTLGSINAA). The HAMP 1 domain occupies 55 to 107 (AETVASIKEIAAQTERVANGNLEQEVTSTRTDEFGSLADSIEQMRQSLRGRLN). Residues 56–536 (ETVASIKEIA…MRAGADGGGA (481 aa)) lie on the Cytoplasmic side of the membrane. Residues 116-145 (LEETQAEAETAREEAEQAKQEAQAAEREAR) form a disordered region. Residues 124-145 (ETAREEAEQAKQEAQAAEREAR) show a composition bias toward basic and acidic residues. The HAMP 2 domain occupies 149–202 (ATYQDTAKRYGETMEAAATGDLTQRVDVDTDHEAMETVGTAFNQMMDDLQATVR). The Methyl-accepting transducer domain occupies 221–459 (TSADIEASAG…STATSVERVA (239 aa)). At E266 the chain carries Glutamate methyl ester (Glu). The interval 278 to 307 (SEDVATASDAARDSSKSALDEMSSIETEVD) is disordered. The span at 287–296 (AARDSSKSAL) shows a compositional bias: basic and acidic residues. The residue at position 473 (E473) is a Glutamate methyl ester (Glu). The disordered stretch occupies residues 512–536 (TEDSETAGGSVEQPVMRAGADGGGA).

Belongs to the methyl-accepting chemotaxis (MCP) protein family. Post-translationally, methylated by CheR.

It is found in the cell membrane. Transduces signals from the phototaxis receptor sensory rhodopsin I (SR-I) to the flagellar motor. Responds to light changes through the variation of the level of methylation. The protein is Sensory rhodopsin I transducer (htr1) of Halobacterium salinarum (strain ATCC 29341 / DSM 671 / R1).